A 151-amino-acid chain; its full sequence is Deoxyuridine 5'-triphosphate nucleotidohydrolase (151 aa).

Substrate-binding positions include 70–72 (RSG), Asn83, 87–89 (LID), and Met97.

This sequence belongs to the dUTPase family. Mg(2+) is required as a cofactor.

It carries out the reaction dUTP + H2O = dUMP + diphosphate + H(+). It participates in pyrimidine metabolism; dUMP biosynthesis; dUMP from dCTP (dUTP route): step 2/2. Functionally, this enzyme is involved in nucleotide metabolism: it produces dUMP, the immediate precursor of thymidine nucleotides and it decreases the intracellular concentration of dUTP so that uracil cannot be incorporated into DNA. This Hamiltonella defensa subsp. Acyrthosiphon pisum (strain 5AT) protein is Deoxyuridine 5'-triphosphate nucleotidohydrolase.